Consider the following 393-residue polypeptide: MMGLGNGRRSMKSPPLILAALVACVIVLGFNYWIASSRSVELQTRIVELEGRVRRAAAERGAVELKKNEFQGELQKQREQLDRIQSSHSFQLENVNKLHQDEKAVLVNNITTGEKLIRDLQDQLKALQRSYSSLQQDIFQFQKNQTSLEKKFSYDLNQCISQMTEVKEQCDERIEEVIRKRNEAPGSRDLAETNNQHQQALKPQPKLQEEVPSEEQMPQEKGDVPRNKSQIPAPNSESLGLKPQVQNEETNEIQAVGEEHQQASIQGQAVADGTRVGAEKLDQHTQLPAGLLARPEEDSQYPEREQLVIRDRQEQQRASEEGGGQKNPGDEYDMDENEAESEREKQAALAGNDRNINVLNADAQKRGIINVPVGSERQSHILNQVGIHIPQQA.

The residue at position 1 (Met1) is an N-acetylmethionine. Residues 1-12 (MMGLGNGRRSMK) are Cytoplasmic-facing. A helical; Signal-anchor for type II membrane protein transmembrane segment spans residues 13–35 (SPPLILAALVACVIVLGFNYWIA). Residues 36-393 (SSRSVELQTR…QVGIHIPQQA (358 aa)) are Lumenal-facing. Positions 40–183 (VELQTRIVEL…IEEVIRKRNE (144 aa)) form a coiled coil. Residues Asn109 and Asn144 are each glycosylated (N-linked (GlcNAc...) asparagine). Disordered stretches follow at residues 180-247 (KRNE…QVQN) and 284-352 (HTQL…LAGN). Ser187 carries the post-translational modification Phosphoserine. Composition is skewed to polar residues over residues 192-201 (ETNNQHQQAL) and 227-247 (NKSQ…QVQN). An N-linked (GlcNAc...) asparagine glycan is attached at Asn227. The segment covering 294 to 320 (RPEEDSQYPEREQLVIRDRQEQQRASE) has biased composition (basic and acidic residues). Residues 330–339 (DEYDMDENEA) are compositionally biased toward acidic residues.

This sequence belongs to the GOLM family. In terms of assembly, interacts with DYM. In terms of processing, glycosylated. Phosphorylation sites are present in the extracellular medium.

Its subcellular location is the golgi apparatus. The protein localises to the cis-Golgi network membrane. Functionally, unknown. Cellular response protein to viral infection. In Mus musculus (Mouse), this protein is Golgi membrane protein 1 (Golm1).